The chain runs to 957 residues: Dystrophin-related protein 2 (957 aa).

2 Spectrin repeats span residues 102–179 and 231–337; these read DLSG…EELE and EHLL…QLQD. The WW domain occupies 358–383; that stretch reads WERAISPNKVPYYINHQAQTTCWDHP. Residues 605–661 form a ZZ-type; degenerate zinc finger; sequence KHQTKCSICRQCPIKGFRYRSLKQFNVDICQTCFLTGRASKGNKLHYPIMEYYTPTT. Residues Cys610, Cys613, Cys634, and Cys637 each coordinate Zn(2+). A Phosphoserine modification is found at Ser748. A compositionally biased stretch (low complexity) spans 876 to 894; that stretch reads QPPSESDGNGSAGSSLASS. The tract at residues 876 to 923 is disordered; it reads QPPSESDGNGSAGSSLASSPRQSEGSHPREKGQTTPDTEVADDVGSKS. Position 910 is a phosphothreonine (Thr910).

Interacts with PRX; this enhances phosphorylation. Identified in a dystroglycan complex that contains at least PRX, DRP2, UTRN, DMD and DAG1. As to expression, detected in quadriceps nerve Schwann cells. Detected in sciatic nerve. Detected in trigeminal nerve Schwann cells (at protein level). Detected in brain and spinal cord.

It localises to the postsynaptic density. The protein localises to the cell projection. The protein resides in the dendrite. It is found in the perikaryon. Its subcellular location is the cell membrane. Required for normal myelination and for normal organization of the cytoplasm and the formation of Cajal bands in myelinating Schwann cells. Required for normal PRX location at appositions between the abaxonal surface of the myelin sheath and the Schwann cell plasma membrane. Possibly involved in membrane-cytoskeleton interactions of the central nervous system. The sequence is that of Dystrophin-related protein 2 (Drp2) from Mus musculus (Mouse).